Consider the following 482-residue polypeptide: Glutamyl-tRNA(Gln) amidotransferase subunit A (482 aa).

Residues K75 and S150 each act as charge relay system in the active site. The active-site Acyl-ester intermediate is the S174.

It belongs to the amidase family. GatA subfamily. In terms of assembly, heterotrimer of A, B and C subunits.

It carries out the reaction L-glutamyl-tRNA(Gln) + L-glutamine + ATP + H2O = L-glutaminyl-tRNA(Gln) + L-glutamate + ADP + phosphate + H(+). In terms of biological role, allows the formation of correctly charged Gln-tRNA(Gln) through the transamidation of misacylated Glu-tRNA(Gln) in organisms which lack glutaminyl-tRNA synthetase. The reaction takes place in the presence of glutamine and ATP through an activated gamma-phospho-Glu-tRNA(Gln). In Cyanothece sp. (strain PCC 7425 / ATCC 29141), this protein is Glutamyl-tRNA(Gln) amidotransferase subunit A.